We begin with the raw amino-acid sequence, 116 residues long: Large ribosomal subunit protein uL24 (116 aa).

A disordered region spans residues 1-21; that stretch reads MATNNGAGKARHKFHVKKGDT.

This sequence belongs to the universal ribosomal protein uL24 family. As to quaternary structure, part of the 50S ribosomal subunit.

One of two assembly initiator proteins, it binds directly to the 5'-end of the 23S rRNA, where it nucleates assembly of the 50S subunit. Its function is as follows. One of the proteins that surrounds the polypeptide exit tunnel on the outside of the subunit. The sequence is that of Large ribosomal subunit protein uL24 from Gloeobacter violaceus (strain ATCC 29082 / PCC 7421).